A 188-amino-acid chain; its full sequence is UPF0301 protein XOO1309 (188 aa).

It belongs to the UPF0301 (AlgH) family.

This chain is UPF0301 protein XOO1309, found in Xanthomonas oryzae pv. oryzae (strain MAFF 311018).